The sequence spans 1010 residues: 2-oxoglutarate dehydrogenase-like, mitochondrial (1010 aa).

The transit peptide at 1-73 (MSQLRLLPSR…RSVHKSWDSF (73 aa)) directs the protein to the mitochondrion. The Ca(2+) site is built by histidine 130, aspartate 143, and aspartate 145. Positions 299, 398, 431, 433, and 663 each coordinate thiamine diphosphate. Mg(2+) contacts are provided by aspartate 398, asparagine 431, and isoleucine 433.

The protein belongs to the alpha-ketoglutarate dehydrogenase family. As to quaternary structure, the OGDHC complex comprises multiple copies of three catalytic enzyme components, the 2-oxoglutarate dehydrogenase (OGDH/E1), the dihydrolipoamide dehydrogenase (DLST/E2) and the dihydrolipoamide dehydrogenase (DLD/E3). OGDHL/E1-like isoenzyme may replace OGDH in the OGDHC complex in the brain. The presence of either ODGH/E1 or ODGHL/E1-like isoenzyme in the complex may depend on its tissular distribution. The cofactor is thiamine diphosphate. Mg(2+) is required as a cofactor.

It is found in the mitochondrion matrix. It carries out the reaction N(6)-[(R)-lipoyl]-L-lysyl-[protein] + 2-oxoglutarate + H(+) = N(6)-[(R)-S(8)-succinyldihydrolipoyl]-L-lysyl-[protein] + CO2. Its function is as follows. 2-oxoglutarate dehydrogenase (E1-like) component of the 2-oxoglutarate dehydrogenase multienzyme complex (OGDHC) which mediates the decarboxylation of alpha-ketoglutarate in the tricarboxylic acid cycle. The OGDHC complex catalyzes the overall conversion of 2-oxoglutarate to succinyl-CoA and CO(2) while reducing NAD(+) to NADH. The OGDHC complex is mainly active in the mitochondrion. Involved in the inhibition of cell proliferation and in apoptosis. This Pongo abelii (Sumatran orangutan) protein is 2-oxoglutarate dehydrogenase-like, mitochondrial (OGDHL).